We begin with the raw amino-acid sequence, 332 residues long: MDKTVLDASLEPLKGKTIAVIGYGNQGRVQANIMRENGLNVIIGNVKDRYYDLAIKEGFEVYDIGEAVKKADVAFLLIPDEIMKEIYEKKIAPILEGKKEFVLDFASGYNVAFGLIRPPKNVDTVMVAPRMVGEGIMDLHKQGKGYPVLLGVKQDASGKAWDYAKAIAKGIGAIPGGIAVISSFEEEALLDLMSEHTWVPILFGAIKACFDVAVKEYGVSPEAALLEFYASGELVEIARLIAEEGIFNQMVHHSTTSQYGTLTRMFKYYDLVKEIVKDEAKYIWDGSFAKEWTLEQQAGYPVFYRLWELAVQSEMAKAEKELYKILRRKVSD.

Residues methionine 1 to serine 182 enclose the KARI N-terminal Rossmann domain. The 147-residue stretch at serine 183–lysine 329 folds into the KARI C-terminal knotted domain.

It belongs to the ketol-acid reductoisomerase family.

The enzyme catalyses (2R)-2,3-dihydroxy-3-methylbutanoate + NADP(+) = (2S)-2-acetolactate + NADPH + H(+). The catalysed reaction is (2R,3R)-2,3-dihydroxy-3-methylpentanoate + NADP(+) = (S)-2-ethyl-2-hydroxy-3-oxobutanoate + NADPH + H(+). It participates in amino-acid biosynthesis; L-isoleucine biosynthesis; L-isoleucine from 2-oxobutanoate: step 2/4. It functions in the pathway amino-acid biosynthesis; L-valine biosynthesis; L-valine from pyruvate: step 2/4. This chain is Putative ketol-acid reductoisomerase 3 (ilvC3), found in Saccharolobus solfataricus (strain ATCC 35092 / DSM 1617 / JCM 11322 / P2) (Sulfolobus solfataricus).